A 1144-amino-acid polypeptide reads, in one-letter code: MNNWQLSYQSPEDLTYHLKKPYLQYDKKEKQVTKVVFDTEANLIWAGDSYGRVSSYDPTYSLYTRHTAHIGSMPVVDLLSNKNGILSLSSDSLHFSNRRGVTQMSLTSADIAQLSDMKTMCYYTNNQNQVLCAGGNTASGIISVDLIKGTLASSTYFTSKVKHMSSNNKLVAIGKQAGSIDLFDPVSNRVIHSLSGHSASITSMDFKDNTLVTAGKSKTFGYLQSDQFINVYDVRIMKQLPPISFSKTPNFVGNHTSSKFPIGADFLQLHPVLPTVVAVASSSGSFDFIDLVNPSLRTPYIHPCKSISQFTLSPSGDYLAFLEEESMINMWNRSNSMSGFTNSAAVLEYQDYPEDSFIPYRVEVGQESYPLSSIGLPYYSETLLSAWPHTVFKTEGIISKKIEGSSSSETDNNSTKSVNRSLSHLSSSKYSLQPYNKFKYGPRNVIEPYKSLRERRKKMVSTTEDNQHRKELLEYKPSNNIDIPPAYSKLQMIYGKFGVMDFDFGGFNTTQYSGLETDIDCVYINEIIHLYRFVPEVYNFVVNCLEDEHIQEKSVLTELGFLFDMMTRANGKICRASNFVDVLESISTANELGLFTDEISTVSGHAGKPSLDEGNLSSHIYNLNLSVDADAEEIMKRSYGKYMTVAQKFNIFLLDRLISEEVERKLHSTDAIVLEELFGLNVDTEIHTLSTCGNFVRQPHLVSSLVVLSPASNNVKYSNKKLSNQTILPYIESSMCRFKQLTARCSKCEKLQNQEYESIVRNLPPLLSLNICLSPEEWTTAKTVNGWLSNHFFATISKDRPILKLQATDLKTSNAIFKYELMSYVARITDDFGEEHLVTYAKILDQKIQQYKWYMFNDFLVQEIDEDEALNISYWWKTPEIVVYSDAEEIRKPFVSVSKLKVDTDILYRDYFSEGIRKDVIRQYRLLTKDEAPGPGTLVALDAEFVSLTEPYLEINCKGMKTLLKPAKKSLARVSLLRGEGELEGVPFIDDYIINECHIEDYLTQFSGIEPGDLDPKLSKKSLVKRQVFYRKMWLLLQLGCVFVGHGLTNDFRQINIYVPESQIRDTSLYYLKGKRYLSLRYLAFAVLRKQVQTGNHDSIEDAHTALLLYRKYLELKEKGVFEMYLENIYDEGRKFGFKVPDTI.

WD repeat units lie at residues 27-66 (KKEK…YTRH), 153-193 (SSTY…VIHS), 196-233 (GHSA…NVYD), and 302-341 (HPCK…SGFT). The linker stretch occupies residues 344–481 (AAVLEYQDYP…LLEYKPSNNI (138 aa)). Residues 482–887 (DIPPAYSKLQ…TPEIVVYSDA (406 aa)) form the USP domain. The Exonuclease domain occupies 939-1110 (VALDAEFVSL…EDAHTALLLY (172 aa)). A divalent metal cation is bound by residues Asp942, Glu944, Asp1051, and Asp1102.

It belongs to the peptidase C19 family. PAN2 subfamily. In terms of assembly, forms a heterotrimer with an asymmetric homodimer of the regulatory subunit PAN3 to form the poly(A)-nuclease (PAN) deadenylation complex. A divalent metal cation serves as cofactor.

Its subcellular location is the cytoplasm. The catalysed reaction is Exonucleolytic cleavage of poly(A) to 5'-AMP.. Positively regulated by the regulatory subunit PAN3. Catalytic subunit of the poly(A)-nuclease (PAN) deadenylation complex, one of two cytoplasmic mRNA deadenylases involved in mRNA turnover. PAN specifically shortens poly(A) tails of RNA and the activity is stimulated by poly(A)-binding protein PAB1. PAN deadenylation is followed by rapid degradation of the shortened mRNA tails by the CCR4-NOT complex. Deadenylated mRNAs are then degraded by two alternative mechanisms, namely exosome-mediated 3'-5' exonucleolytic degradation, or deadenylation-dependent mRNA decaping and subsequent 5'-3' exonucleolytic degradation by XRN1. May also be involved in post-transcriptional maturation of mRNA poly(A) tails. This chain is PAN2-PAN3 deadenylation complex catalytic subunit PAN2, found in Kluyveromyces lactis (strain ATCC 8585 / CBS 2359 / DSM 70799 / NBRC 1267 / NRRL Y-1140 / WM37) (Yeast).